The primary structure comprises 347 residues: Gamma-glutamyl hydrolase B (347 aa).

A signal peptide spans 1–22 (MIKLFSLFIYLYLISNLKLINT). One can recognise a Gamma-glutamyl hydrolase domain in the interval 23–314 (INNTPVIGIL…THVEQIYIFN (292 aa)). The Nucleophile role is filled by Cys128. N-linked (GlcNAc...) asparagine glycosylation is found at Asn152, Asn158, and Asn201. His240 serves as the catalytic Proton donor. Residues Asn273, Asn314, and Asn318 are each glycosylated (N-linked (GlcNAc...) asparagine).

It belongs to the peptidase C26 family.

It localises to the secreted. The protein localises to the extracellular space. The enzyme catalyses (6S)-5,6,7,8-tetrahydrofolyl-(gamma-L-Glu)(n) + (n-1) H2O = (6S)-5,6,7,8-tetrahydrofolate + (n-1) L-glutamate. This is Gamma-glutamyl hydrolase B (gghB) from Dictyostelium discoideum (Social amoeba).